The sequence spans 771 residues: Solute carrier family 7 member 14 (771 aa).

The next 6 helical transmembrane spans lie at 58 to 78 (LISL…SGLV), 83 to 103 (AGPG…LSGV), 119 to 141 (AYTY…NLIL), 187 to 207 (YPDL…ALGV), 216 to 236 (VLNV…LFFI), and 251 to 271 (WSGV…FDII). Residue Asn282 is glycosylated (N-linked (GlcNAc...) asparagine). Helical transmembrane passes span 291–311 (ASLV…TLMV), 336–356 (FVVA…SLFP), 384–404 (PVVA…LVSL), and 407–427 (LIEM…VCVL). 4 positions are modified to phosphoserine: Ser465, Ser468, Ser475, and Ser488. Helical transmembrane passes span 565 to 585 (VTIC…FIIF), 596 to 616 (WAIL…FVIL), 628 to 648 (MAPC…YLML), and 655 to 675 (WIRF…YGIW). Asn676 is a glycosylation site (N-linked (GlcNAc...) asparagine). A disordered region spans residues 735–771 (SDAKANSRTSSKAKSKSKHKQNSEALIANDELDCSPE). Over residues 745–754 (SKAKSKSKHK) the composition is skewed to basic residues. 2 positions are modified to phosphoserine: Ser757 and Ser769.

It belongs to the amino acid-polyamine-organocation (APC) superfamily. In terms of tissue distribution, expressed in retina, brain and spinal cord. In the retina, expressed in the inner nuclear layer and photoreceptor layer (at protein level). Expressed in liver, spleen, lung, kidney intestine and brain (at protein level).

The protein localises to the lysosome membrane. The catalysed reaction is 4-aminobutanoate(in) = 4-aminobutanoate(out). Its function is as follows. Imports 4-aminobutanoate (GABA) into lysosomes. May act as a GABA sensor that regulates mTORC2-dependent INS signaling and gluconeogenesis. The transport mechanism and substrate selectivity remain to be elucidated. In Mus musculus (Mouse), this protein is Solute carrier family 7 member 14.